Consider the following 404-residue polypeptide: Odorant receptor 67c (404 aa).

The Cytoplasmic portion of the chain corresponds to M1–K45. A helical transmembrane segment spans residues I46–F66. The Extracellular portion of the chain corresponds to Y67–A79. Residues I80 to I100 form a helical membrane-spanning segment. The Cytoplasmic portion of the chain corresponds to R101–V139. Residues I140 to I160 traverse the membrane as a helical segment. Residues K161–H204 are Extracellular-facing. The chain crosses the membrane as a helical span at residues G205–T225. Over Q226 to S277 the chain is Cytoplasmic. Residues F278–V298 traverse the membrane as a helical segment. Over T299–E304 the chain is Extracellular. Residues V305 to Y326 traverse the membrane as a helical segment. Topologically, residues G327–P373 are cytoplasmic. A helical membrane pass occupies residues T374–F394. At A395–N404 the chain is on the extracellular side.

The protein belongs to the insect chemoreceptor superfamily. Heteromeric odorant receptor channel (TC 1.A.69) family. Or49a subfamily. As to quaternary structure, interacts with Orco. Complexes exist early in the endomembrane system in olfactory sensory neurons (OSNs), coupling these complexes to the conserved ciliary trafficking pathway. Expressed in olfactory sensory neurons in the antenna.

Its subcellular location is the cell membrane. Functionally, odorant receptor which mediates acceptance or avoidance behavior, depending on its substrates. The odorant receptor repertoire encodes a large collection of odor stimuli that vary widely in identity, intensity, and duration. May form a complex with Orco to form odorant-sensing units, providing sensitive and prolonged odorant signaling and calcium permeability. This is Odorant receptor 67c (Or67c) from Drosophila melanogaster (Fruit fly).